We begin with the raw amino-acid sequence, 2078 residues long: Autophagy-related protein 2 homolog B (2078 aa).

A Chorein N-terminal domain is found at 13–108 (ACRYLLQRYL…EMVFRPRPRP (96 aa)). Serine 255 and serine 379 each carry phosphoserine. A disordered region spans residues 473–495 (GSTFPSNLVHPTPLQKTSLPSRS). Over residues 486–495 (LQKTSLPSRS) the composition is skewed to polar residues. Serine 497, serine 840, serine 886, serine 899, and serine 1008 each carry phosphoserine. The tract at residues 868–888 (EEEENDGHYQEEEEGGAHSLK) is disordered. Basic and acidic residues predominate over residues 873-888 (DGHYQEEEEGGAHSLK). The residue at position 1012 (tyrosine 1012) is a Phosphotyrosine. Phosphoserine occurs at positions 1016 and 1018. Position 1022 is a phosphothreonine (threonine 1022). A disordered region spans residues 1375–1405 (ADMKPGAFQRRSKVDSSGRSSSRGPVLPEAD). Position 1526 is a phosphoserine (serine 1526).

The protein belongs to the ATG2 family. In terms of assembly, interacts with WDR45/WIPI4.

The protein resides in the preautophagosomal structure membrane. The protein localises to the lipid droplet. It localises to the endoplasmic reticulum membrane. It catalyses the reaction a 1,2-diacyl-sn-glycero-3-phospho-L-serine(in) = a 1,2-diacyl-sn-glycero-3-phospho-L-serine(out). The enzyme catalyses a 1,2-diacyl-sn-glycero-3-phosphoethanolamine(in) = a 1,2-diacyl-sn-glycero-3-phosphoethanolamine(out). Its function is as follows. Lipid transfer protein required for both autophagosome formation and regulation of lipid droplet morphology and dispersion. Tethers the edge of the isolation membrane (IM) to the endoplasmic reticulum (ER) and mediates direct lipid transfer from ER to IM for IM expansion. Binds to the ER exit site (ERES), which is the membrane source for autophagosome formation, and extracts phospholipids from the membrane source and transfers them to ATG9 (ATG9A or ATG9B) to the IM for membrane expansion. Lipid transfer activity is enhanced by WDR45/WIPI4, which promotes ATG2B-association with phosphatidylinositol 3-monophosphate (PI3P)-containing membranes. In Homo sapiens (Human), this protein is Autophagy-related protein 2 homolog B.